The sequence spans 430 residues: Glycine reductase complex component B subunits alpha and beta (430 aa).

Catalysis depends on Cys-242, which acts as the Schiff-base intermediate with substrate; via pyruvic acid. Residue Cys-242 is modified to Pyruvic acid (Cys).

In terms of assembly, heterohexamer of two alpha, two beta and two gamma subunits. Component of the glycine reductase complex, together with components A and C. PB is substrate specific. Post-translationally, the peptide chain is cleaved into beta and alpha chains, and the alpha chain N-terminal cysteine is deaminated and oxidized to form a reactive pyruvoyl group.

The enzyme catalyses acetyl phosphate + [thioredoxin]-disulfide + NH4(+) + H2O = [thioredoxin]-dithiol + glycine + phosphate + H(+). In terms of biological role, in the first step of glycine reductase, the substrate is bound to component PB via a Schiff base intermediate. Then the PB-activated substrate is nucleophilically attacked by the selenol anion of component PA to transform it to a carboxymethylated selenoether and the respective amine. By action of component PC, acetyl phosphate is formed, leaving component PA in its oxidized state. Finally component PA becomes reduced by the thioredoxin system to start a new catalytic cycle of reductive deamination. The polypeptide is Glycine reductase complex component B subunits alpha and beta (grdE) (Acetoanaerobium sticklandii (strain ATCC 12662 / DSM 519 / JCM 1433 / CCUG 9281 / NCIMB 10654 / HF) (Clostridium sticklandii)).